A 581-amino-acid chain; its full sequence is Spastin (581 aa).

The segment covering Met-1–Gly-12 has biased composition (basic residues). Positions Met-1–Ala-39 are disordered. The segment at Met-1–Leu-48 is required for nuclear localization. The Cytoplasmic segment spans residues Met-1–Pro-54. Residues Met-1 to Gln-78 are required for interaction with ATL1. The interval Met-1–Leu-191 is required for midbody localization. The interval Met-1–Lys-265 is required for interaction with RTN1. A Nuclear localization signal motif is present at residues Pro-4–Lys-11. Pro residues predominate over residues Pro-20–Ala-39. A required for interaction with SSNA1 and microtubules region spans residues Leu-48–Met-85. The helical intramembrane region spans Leu-55 to Trp-75. The short motif at Val-57–Leu-65 is the Nuclear export signal element. Topologically, residues Leu-76–Val-581 are cytoplasmic. The interval Ser-90–Ala-111 is disordered. The span at Pro-97–Gly-106 shows a compositional bias: pro residues. Positions His-118–Leu-192 constitute an MIT domain. Positions Glu-193 to Val-581 are sufficient for microtubule severing. The disordered stretch occupies residues Gly-195–Lys-277. A compositionally biased stretch (polar residues) spans His-206–Leu-225. Ser-210 and Ser-233 each carry phosphoserine. Residues Ser-235–Ile-293 form a required for interaction with microtubules and microtubule severing region. Positions His-254–Thr-271 are enriched in polar residues. The residue at position 271 (Thr-271) is a Phosphothreonine. The short motif at Arg-274–Lys-277 is the Nuclear localization signal element. Gly-347–Thr-354 provides a ligand contact to ATP. Ser-562 is modified (phosphoserine).

Belongs to the AAA ATPase family. Spastin subfamily. Homohexamer. Mostly monomeric, but assembles into hexameric structure for short periods of time. Oligomerization seems to be a prerequisite for catalytic activity. Binding to ATP in a cleft between two adjacent subunits stabilizes the homohexameric form. Binds to microtubules at least in part via the alpha-tubulin and beta-tubulin tails. The hexamer adopts a ring conformation through which microtubules pass prior to being severed. Does not interact strongly with tubulin heterodimers. Interacts (via MIT domain) with CHMP1B; the interaction is direct. Interacts with SSNA1. Interacts with ATL1. Interacts with RTN1. Interacts with ZFYVE27. Interacts with REEP1. Interacts (via MIT domain) with IST1.

It is found in the membrane. The protein localises to the endoplasmic reticulum. Its subcellular location is the midbody. It localises to the cytoplasm. The protein resides in the cytoskeleton. It is found in the microtubule organizing center. The protein localises to the centrosome. Its subcellular location is the perinuclear region. It localises to the nucleus. The protein resides in the spindle. It is found in the cell projection. The protein localises to the axon. It catalyses the reaction n ATP + n H2O + a microtubule = n ADP + n phosphate + (n+1) alpha/beta tubulin heterodimers.. Its activity is regulated as follows. Allosteric enzyme with a cooperative mechanism; at least two neighbor subunits influence each other strongly in spastin hexamers. Microtubule binding promotes cooperative interactions among spastin subunits. Functionally, ATP-dependent microtubule severing protein that specifically recognizes and cuts microtubules that are polyglutamylated. Preferentially recognizes and acts on microtubules decorated with short polyglutamate tails: severing activity increases as the number of glutamates per tubulin rises from one to eight, but decreases beyond this glutamylation threshold. Severing activity is not dependent on tubulin acetylation or detyrosination. Microtubule severing promotes reorganization of cellular microtubule arrays and the release of microtubules from the centrosome following nucleation. It is critical for the biogenesis and maintenance of complex microtubule arrays in axons, spindles and cilia. SPAST is involved in abscission step of cytokinesis and nuclear envelope reassembly during anaphase in cooperation with the ESCRT-III complex. Recruited at the midbody, probably by IST1, and participates in membrane fission during abscission together with the ESCRT-III complex. Recruited to the nuclear membrane by IST1 and mediates microtubule severing, promoting nuclear envelope sealing and mitotic spindle disassembly during late anaphase. Required for membrane traffic from the endoplasmic reticulum (ER) to the Golgi and endosome recycling. Recruited by IST1 to endosomes and regulates early endosomal tubulation and recycling by mediating microtubule severing. Probably plays a role in axon growth and the formation of axonal branches. This is Spastin from Rattus norvegicus (Rat).